The chain runs to 474 residues: Nitrosuccinate lyase (474 aa).

Ser295 serves as the catalytic Proton acceptor. Residues Lys301 and Asn303 each contribute to the fumarate site. Arg334 (proton donor) is an active-site residue.

Belongs to the class-II fumarase/aspartase family.

It catalyses the reaction 2-nitrobutanedioate = fumarate + nitrite + H(+). In terms of biological role, involved in the biosynthesis of desferrioxamine derivatives which have iron-binding properties and may act as siderophores. Catalyzes the formation of nitrous acid from nitrosuccinic acid (2-nitrobutanedioate) by elimination of its nitro group. This is Nitrosuccinate lyase from Streptomyces davaonensis (strain DSM 101723 / JCM 4913 / KCC S-0913 / 768).